Consider the following 216-residue polypeptide: UPF0323 lipoprotein HPAG1_0235 (216 aa).

The first 27 residues, 1–27 (MKKPYRKISDYAIVGGLSALVMVSIVG), serve as a signal peptide directing secretion. Residue Cys28 is the site of N-palmitoyl cysteine attachment. A lipid anchor (S-diacylglycerol cysteine) is attached at Cys28. Residues 159-196 (QRTYKSPQAYQRSQNSFSKSAPSASGMGTASKGQSGFF) are compositionally biased toward polar residues. The interval 159-216 (QRTYKSPQAYQRSQNSFSKSAPSASGMGTASKGQSGFFGSSRPTSSPAVSSGTRGFNA) is disordered. The span at 198–209 (SSRPTSSPAVSS) shows a compositional bias: low complexity.

Belongs to the UPF0323 family.

It is found in the cell membrane. The polypeptide is UPF0323 lipoprotein HPAG1_0235 (Helicobacter pylori (strain HPAG1)).